Here is a 385-residue protein sequence, read N- to C-terminus: Alkanesulfonate monooxygenase 2 (385 aa).

The protein belongs to the SsuD family.

It carries out the reaction an alkanesulfonate + FMNH2 + O2 = an aldehyde + FMN + sulfite + H2O + 2 H(+). Functionally, catalyzes the desulfonation of aliphatic sulfonates. In Mesorhizobium japonicum (strain LMG 29417 / CECT 9101 / MAFF 303099) (Mesorhizobium loti (strain MAFF 303099)), this protein is Alkanesulfonate monooxygenase 2 (ssuD2).